Reading from the N-terminus, the 256-residue chain is Type III pantothenate kinase (256 aa).

6–13 serves as a coordination point for ATP; sequence DAGNSRIK. Residues Tyr90 and 97 to 100 each bind substrate; that span reads GSDR. The active-site Proton acceptor is Asp99. An ATP-binding site is contributed by Thr123. Residue Thr187 coordinates substrate.

It belongs to the type III pantothenate kinase family. As to quaternary structure, homodimer. The cofactor is NH4(+). K(+) serves as cofactor.

It localises to the cytoplasm. It catalyses the reaction (R)-pantothenate + ATP = (R)-4'-phosphopantothenate + ADP + H(+). It participates in cofactor biosynthesis; coenzyme A biosynthesis; CoA from (R)-pantothenate: step 1/5. In terms of biological role, catalyzes the phosphorylation of pantothenate (Pan), the first step in CoA biosynthesis. The polypeptide is Type III pantothenate kinase (Burkholderia mallei (strain NCTC 10247)).